Here is an 844-residue protein sequence, read N- to C-terminus: Translation initiation factor IF-2 (844 aa).

Residues 1–11 are compositionally biased toward basic and acidic residues; that stretch reads MTEDVKADVPK. 2 disordered regions span residues 1-35 and 79-248; these read MTED…SKAV and RLEA…KGAA. Positions 21-33 are enriched in low complexity; sequence TTVSGTTTSGKSK. Residues 79-161 show a composition bias toward basic and acidic residues; sequence RLEAEKAATK…AAEEAKRYAE (83 aa). The span at 162-175 shows a compositional bias: acidic residues; the sequence is ADDSDNESSSEDYS. Positions 200–210 are enriched in basic residues; sequence RGKNKVAKAKK. Positions 211–237 are enriched in basic and acidic residues; the sequence is GGRDDENSKNSKNERESNRKNQKDAKF. Residues 343–513 enclose the tr-type G domain; sequence TRAPVVTIMG…LLQSEVLELT (171 aa). A G1 region spans residues 352–359; the sequence is GHVDHGKT. GTP is bound at residue 352-359; it reads GHVDHGKT. Residues 377–381 form a G2 region; it reads GITQH. Residues 399–402 are G3; that stretch reads DTPG. GTP-binding positions include 399–403 and 453–456; these read DTPGH and NKID. Residues 453–456 are G4; it reads NKID. The interval 489–491 is G5; that stretch reads SAK.

This sequence belongs to the TRAFAC class translation factor GTPase superfamily. Classic translation factor GTPase family. IF-2 subfamily.

The protein resides in the cytoplasm. Its function is as follows. One of the essential components for the initiation of protein synthesis. Protects formylmethionyl-tRNA from spontaneous hydrolysis and promotes its binding to the 30S ribosomal subunits. Also involved in the hydrolysis of GTP during the formation of the 70S ribosomal complex. This chain is Translation initiation factor IF-2, found in Haemophilus influenzae (strain PittGG).